The chain runs to 184 residues: ATP synthase subunit b, chloroplastic (184 aa).

Residues 27–49 (LATNLINLSVVLGVLIFFGKGVL) traverse the membrane as a helical segment.

This sequence belongs to the ATPase B chain family. In terms of assembly, F-type ATPases have 2 components, F(1) - the catalytic core - and F(0) - the membrane proton channel. F(1) has five subunits: alpha(3), beta(3), gamma(1), delta(1), epsilon(1). F(0) has four main subunits: a(1), b(1), b'(1) and c(10-14). The alpha and beta chains form an alternating ring which encloses part of the gamma chain. F(1) is attached to F(0) by a central stalk formed by the gamma and epsilon chains, while a peripheral stalk is formed by the delta, b and b' chains.

The protein localises to the plastid. It localises to the chloroplast thylakoid membrane. Functionally, f(1)F(0) ATP synthase produces ATP from ADP in the presence of a proton or sodium gradient. F-type ATPases consist of two structural domains, F(1) containing the extramembraneous catalytic core and F(0) containing the membrane proton channel, linked together by a central stalk and a peripheral stalk. During catalysis, ATP synthesis in the catalytic domain of F(1) is coupled via a rotary mechanism of the central stalk subunits to proton translocation. In terms of biological role, component of the F(0) channel, it forms part of the peripheral stalk, linking F(1) to F(0). This chain is ATP synthase subunit b, chloroplastic, found in Nicotiana tabacum (Common tobacco).